Reading from the N-terminus, the 463-residue chain is Argininosuccinate lyase (463 aa).

This sequence belongs to the lyase 1 family. Argininosuccinate lyase subfamily.

The protein resides in the cytoplasm. It catalyses the reaction 2-(N(omega)-L-arginino)succinate = fumarate + L-arginine. It functions in the pathway amino-acid biosynthesis; L-arginine biosynthesis; L-arginine from L-ornithine and carbamoyl phosphate: step 3/3. This chain is Argininosuccinate lyase, found in Bradyrhizobium sp. (strain ORS 278).